Here is a 506-residue protein sequence, read N- to C-terminus: UBX domain-containing protein 4 (506 aa).

The segment at 1 to 199 is interaction with UBQLN1; it reads MLWFQGAIPA…PAEDLTVRVE (199 aa). Residues 1 to 411 are Cytoplasmic-facing; the sequence is MLWFQGAIPA…VPSSSGDIWT (411 aa). Composition is skewed to polar residues over residues 114 to 136 and 177 to 189; these read SLKG…TPSA and SLSQ…SNQR. The interval 114 to 193 is disordered; sequence SLKGETSVTN…GCSNQRPAED (80 aa). The 79-residue stretch at 313–391 folds into the UBX domain; the sequence is DRSTIARIQF…ELAPSASVVL (79 aa). Residues 412–432 lie within the membrane without spanning it; it reads LLGTVLYPFLAIWRLISNFLF. At 433–506 the chain is on the cytoplasmic side; that stretch reads SNPPPAQTSA…TWNGNSTQQM (74 aa). The tract at residues 437–506 is disordered; the sequence is PAQTSARATS…TWNGNSTQQM (70 aa). Residues 444–456 show a composition bias toward low complexity; sequence ATSTEPSNSASSS. Over residues 457–489 the composition is skewed to basic and acidic residues; the sequence is KSEKREPVRKRVLEKRGEDFKKEGKIYRLRTQD. Phosphothreonine is present on threonine 487. The span at 496-506 shows a compositional bias: polar residues; the sequence is NTWNGNSTQQM.

Directly interacts with VCP. Interacts with UBQLN1. Forms a complex with VCP and UBQLN1.

The protein resides in the endoplasmic reticulum membrane. The protein localises to the nucleus envelope. In terms of biological role, involved in endoplasmic reticulum-associated protein degradation (ERAD). Acts as a platform to recruit both UBQLN1 and VCP to the ER during ERAD. This chain is UBX domain-containing protein 4 (Ubxn4), found in Rattus norvegicus (Rat).